The primary structure comprises 246 residues: Probable transcriptional regulatory protein PM0980 (246 aa).

This sequence belongs to the TACO1 family.

The protein localises to the cytoplasm. This Pasteurella multocida (strain Pm70) protein is Probable transcriptional regulatory protein PM0980.